The sequence spans 322 residues: DNA-directed RNA polymerase subunit alpha (322 aa).

The alpha N-terminal domain (alpha-NTD) stretch occupies residues 1 to 229; that stretch reads MNFVNNLFTL…KYFDLIFSFI (229 aa). Positions 244-322 are alpha C-terminal domain (alpha-CTD); sequence NLNLKINSVY…NLNSKIEYDL (79 aa).

Belongs to the RNA polymerase alpha chain family. Homodimer. The RNAP catalytic core consists of 2 alpha, 1 beta, 1 beta' and 1 omega subunit. When a sigma factor is associated with the core the holoenzyme is formed, which can initiate transcription.

It carries out the reaction RNA(n) + a ribonucleoside 5'-triphosphate = RNA(n+1) + diphosphate. In terms of biological role, DNA-dependent RNA polymerase catalyzes the transcription of DNA into RNA using the four ribonucleoside triphosphates as substrates. In Carsonella ruddii (strain PV), this protein is DNA-directed RNA polymerase subunit alpha (rpoA).